We begin with the raw amino-acid sequence, 99 residues long: Large ribosomal subunit protein uL23 (99 aa).

Belongs to the universal ribosomal protein uL23 family. As to quaternary structure, part of the 50S ribosomal subunit. Contacts protein L29, and trigger factor when it is bound to the ribosome.

Its function is as follows. One of the early assembly proteins it binds 23S rRNA. One of the proteins that surrounds the polypeptide exit tunnel on the outside of the ribosome. Forms the main docking site for trigger factor binding to the ribosome. This chain is Large ribosomal subunit protein uL23, found in Magnetococcus marinus (strain ATCC BAA-1437 / JCM 17883 / MC-1).